Reading from the N-terminus, the 413-residue chain is Serine hydroxymethyltransferase (413 aa).

Residues leucine 119 and 123–125 (GHL) contribute to the (6S)-5,6,7,8-tetrahydrofolate site. Lysine 228 carries the N6-(pyridoxal phosphate)lysine modification. A (6S)-5,6,7,8-tetrahydrofolate-binding site is contributed by 351-353 (SPF).

Belongs to the SHMT family. As to quaternary structure, homodimer. The cofactor is pyridoxal 5'-phosphate.

It is found in the cytoplasm. It catalyses the reaction (6R)-5,10-methylene-5,6,7,8-tetrahydrofolate + glycine + H2O = (6S)-5,6,7,8-tetrahydrofolate + L-serine. Its pathway is one-carbon metabolism; tetrahydrofolate interconversion. It functions in the pathway amino-acid biosynthesis; glycine biosynthesis; glycine from L-serine: step 1/1. Catalyzes the reversible interconversion of serine and glycine with tetrahydrofolate (THF) serving as the one-carbon carrier. This reaction serves as the major source of one-carbon groups required for the biosynthesis of purines, thymidylate, methionine, and other important biomolecules. Also exhibits THF-independent aldolase activity toward beta-hydroxyamino acids, producing glycine and aldehydes, via a retro-aldol mechanism. This is Serine hydroxymethyltransferase from Clostridium botulinum (strain Okra / Type B1).